The following is a 238-amino-acid chain: Thymidine kinase a (238 aa).

ATP is bound by residues 38–45 (GPMFSGKS), 70–72 (DTR), and 115–118 (DEAQ). The active-site Proton acceptor is Glu116. Substrate is bound at residue Tyr147. 2 residues coordinate Zn(2+): Cys172 and Cys175. Residues 191 to 195 (TELIG) and Tyr200 each bind substrate. Position 204 (Cys204) interacts with Zn(2+).

This sequence belongs to the thymidine kinase family. In terms of assembly, monomer and dimer. Dimerization is stimulated by ATP. As to expression, expressed ubiquitously.

Its subcellular location is the cytoplasm. It carries out the reaction thymidine + ATP = dTMP + ADP + H(+). Its pathway is purine metabolism. It participates in pyrimidine metabolism. Functionally, part of the salvage pathway for purine and pyrimidine deoxyribonucleotide synthesis. Phosphorylates preferentially purines over pyrimidines. Mediates tolerance to genotoxins, such as ultraviolet-C (UV-C) irradiation, MMC, a DNA crosslinker, and ZEO, a DNA intercalator, that induce double-strand breaks and thus contributes to several DNA repair pathways by providing deoxythymidine triphosphate that serve as precursors for DNA repair and to balance deoxyribonucleotides pools. This is Thymidine kinase a from Arabidopsis thaliana (Mouse-ear cress).